We begin with the raw amino-acid sequence, 612 residues long: Phragmoplastin DRP1D (612 aa).

Met1 carries the N-acetylmethionine modification. One can recognise a Dynamin-type G domain in the interval 32 to 301 (WEALPSVAVV…LESVIRSRIP (270 aa)). Residues 42–49 (GGQSSGKS) are G1 motif. 45 to 50 (SSGKSS) lines the GTP pocket. Positions 68 to 70 (VTR) are G2 motif. The G3 motif stretch occupies residues 143–146 (DLPG). The segment at 212–215 (TKLD) is G4 motif. GTP is bound by residues 213–218 (KLDLMD) and 243–246 (NRSQ). The interval 242-245 (VNRS) is G5 motif. Positions 520–612 (FRKIASNVAA…DEIDAAVWVR (93 aa)) constitute a GED domain.

The protein belongs to the TRAFAC class dynamin-like GTPase superfamily. Dynamin/Fzo/YdjA family. Forms homodimer and may homooligomerize and heterooligomerize to form the phragmoplastin complex. Binds to PHIP1.

The protein localises to the cytoplasm. Its subcellular location is the cytoskeleton. The catalysed reaction is GTP + H2O = GDP + phosphate + H(+). Putative microtubule-associated force-producing protein. Has a GTPase activity. This chain is Phragmoplastin DRP1D, found in Arabidopsis thaliana (Mouse-ear cress).